The sequence spans 29 residues: Cycloviolacin-O22 (29 aa).

A cross-link (cyclopeptide (Gly-Asn)) is located at residues 1 to 29; sequence GLPICGETCVGGTCNTPGCTCSWPVCTRN. Disulfide bonds link Cys-5–Cys-19, Cys-9–Cys-21, and Cys-14–Cys-26.

Post-translationally, this is a cyclic peptide. As to expression, expressed in roots and runners but not in leaves, petals and petioles (at protein level).

Its function is as follows. Probably participates in a plant defense mechanism. This Viola odorata (Sweet violet) protein is Cycloviolacin-O22.